A 174-amino-acid polypeptide reads, in one-letter code: MSLRRKAKPKPVQQKVVDHTLRTCHEVEGFPVYSERTSSYLGTISDICFSLKGDCLGFILAQKRFLHHHHALLRACDISSIFDDRILASVSSEQLLPLPKSCFTYEQMKMKLVKSQEGDILGMLEDVYFCLDRGIIVAYELSDGFFSDLAGSKRQIQRADSLVEVRKDEIVLNG.

This is an uncharacterized protein from Bacillus subtilis (strain 168).